Here is a 194-residue protein sequence, read N- to C-terminus: Adenylate kinase isoenzyme 1 (194 aa).

Residue M1 is modified to N-acetylmethionine. 18 to 23 (GSGKGT) contacts ATP. Residue S38 is modified to Phosphoserine. Residues 38–67 (STGDLLRAEVSSGSARGKKLSEIMEKGQLV) form an NMP region. AMP is bound by residues T39, R44, 65-67 (QLV), 94-97 (GYPR), and Q101. Positions 131–141 (KRGETSGRVDD) are LID. R132 is an ATP binding site. Positions 138 and 149 each coordinate AMP. G177 serves as a coordination point for ATP.

The protein belongs to the adenylate kinase family. AK1 subfamily. In terms of assembly, monomer. Requires Mg(2+) as cofactor.

Its subcellular location is the cytoplasm. The enzyme catalyses a ribonucleoside 5'-phosphate + ATP = a ribonucleoside 5'-diphosphate + ADP. The catalysed reaction is AMP + ATP = 2 ADP. It carries out the reaction dAMP + ATP = dADP + ADP. It catalyses the reaction dATP + AMP = dADP + ADP. The enzyme catalyses dAMP + dATP = 2 dADP. The catalysed reaction is a 2'-deoxyribonucleoside 5'-diphosphate + ATP = a 2'-deoxyribonucleoside 5'-triphosphate + ADP. It carries out the reaction a ribonucleoside 5'-diphosphate + ATP = a ribonucleoside 5'-triphosphate + ADP. It catalyses the reaction CDP + GTP = CTP + GDP. The enzyme catalyses GDP + ATP = GTP + ADP. The catalysed reaction is UDP + ATP = UTP + ADP. It carries out the reaction GTP + UDP = UTP + GDP. It catalyses the reaction dTDP + GTP = dTTP + GDP. The enzyme catalyses dCDP + GTP = dCTP + GDP. The catalysed reaction is dGDP + ATP = dGTP + ADP. It carries out the reaction dADP + GTP = dATP + GDP. It catalyses the reaction thiamine diphosphate + ADP = thiamine triphosphate + AMP. Its function is as follows. Catalyzes the reversible transfer of the terminal phosphate group between ATP and AMP. Also displays broad nucleoside diphosphate kinase activity. Plays an important role in cellular energy homeostasis and in adenine nucleotide metabolism. Also catalyzes at a very low rate the synthesis of thiamine triphosphate (ThTP) from thiamine diphosphate (ThDP) and ADP. The protein is Adenylate kinase isoenzyme 1 of Oryctolagus cuniculus (Rabbit).